The sequence spans 1014 residues: Regulator of telomere elongation helicase 1 homolog (1014 aa).

A Helicase ATP-binding domain is found at 7 to 324 (AGIPVHFPFE…KEMLLELEKA (318 aa)). Residue 42 to 49 (SPTGTGKT) participates in ATP binding. [4Fe-4S] cluster-binding residues include Cys147, Cys165, Cys174, and Cys210. The DEAH box signature appears at 253 to 256 (DEAH). At Thr873 the chain carries Phosphothreonine. The disordered stretch occupies residues 891–917 (TDMVKTEPGTSNSCSYGNTSSSGSDSR). Residues 899 to 917 (GTSNSCSYGNTSSSGSDSR) show a composition bias toward low complexity.

Belongs to the helicase family. RAD3/XPD subfamily.

It localises to the nucleus. It carries out the reaction ATP + H2O = ADP + phosphate + H(+). Its function is as follows. A probable ATP-dependent DNA helicase implicated in DNA repair and the maintenance of genomic stability. Acts as an anti-recombinase to counteract toxic recombination and limit crossover during meiosis. Regulates meiotic recombination and crossover homeostasis by physically dissociating strand invasion events and thereby promotes noncrossover repair by meiotic synthesis dependent strand annealing (SDSA) as well as disassembly of D loop recombination intermediates. The protein is Regulator of telomere elongation helicase 1 homolog of Drosophila mojavensis (Fruit fly).